Consider the following 455-residue polypeptide: Peroxisomal membrane protein PEX3 (455 aa).

A compositionally biased stretch (polar residues) spans 113 to 125 (TVLSDDFSTSQEG). Residues 113 to 135 (TVLSDDFSTSQEGAISEDTNKPP) are disordered. The chain crosses the membrane as a helical span at residues 155–171 (FLTLIYCESLLIVFLHL).

This sequence belongs to the peroxin-3 family. As to quaternary structure, component of the peroxisomal docking complex, composed of at least PEX3, PEX13, PEX14 and PEX17. Component of the peroxisomal translocation complex, composed of at least PEX3, PEX2, PEX10 and PEX12. Interacts with PEX19. Interacts with the pexophagy receptor ATG30.

It is found in the peroxisome membrane. Its function is as follows. Peroxisomal membrane protein required for peroxisome biosynthesis. Shared component of both the peroxisomal docking complex and the peroxisomal translocation complex. The two types of peroxisomal matrix targeting signals, PTS1 and PTS2, are first recognized in the cytosol by their receptors PEX5 and PEX7, respectively, which then carry the cargo to the peroxisomal membrane. The peroxisomal targeting signal (PTS) receptor-cargo complexes interact with peroxisomal membrane protein (PMP) components of the docking complex. They have then additional downstream interactions with the translocation complex, leading to the transport of fully folded and oligomerized cargo into the peroxisome matrix. PEX3 acts as an anchoring site for PEX19 on the peroxisomal membrane and thus plays a crucial role in the assembly of the peroxisomal translocation complex. Is also essential for the interaction between the two complexes. Finally. PEX3 activates selective autophagy of peroxisomes (pexophagy) via interaction with the pexophagy receptor ATG30. The polypeptide is Peroxisomal membrane protein PEX3 (Komagataella phaffii (strain GS115 / ATCC 20864) (Yeast)).